The sequence spans 425 residues: Serine/threonine-protein kinase VRK1 (425 aa).

In terms of domain architecture, Protein kinase spans 38-329; the sequence is WKLGSAVGQG…KLRGILQQGL (292 aa). ATP-binding positions include 44–52 and Lys72; that span reads VGQGGFGLL. Asp178 acts as the Proton acceptor in catalysis. Residues 343 to 425 are disordered; that stretch reads GVATNSTSLP…KSRGRPKKNS (83 aa). Residues 415-425 show a composition bias toward basic residues; that stretch reads KKSRGRPKKNS.

Belongs to the protein kinase superfamily. CK1 Ser/Thr protein kinase family. VRK subfamily.

The protein localises to the nucleus. Its subcellular location is the cytoplasm. It is found in the cajal body. It catalyses the reaction L-seryl-[protein] + ATP = O-phospho-L-seryl-[protein] + ADP + H(+). The catalysed reaction is L-threonyl-[protein] + ATP = O-phospho-L-threonyl-[protein] + ADP + H(+). Serine/threonine kinase involved in the regulation of key cellular processes including the cell cycle, nuclear condensation, transcription regulation, and DNA damage response. Controls chromatin organization and remodeling by mediating phosphorylation of histone H3 on 'Thr-4' and histone H2AX (H2aXT4ph). It also phosphorylates KAT5 in response to DNA damage, promoting KAT5 association with chromatin and histone acetyltransferase activity. Is involved in the regulation of cell cycle progression of neural progenitors, and is required for proper cortical neuronal migration. Is involved in neurite elongation and branching in motor neurons, and has an essential role in Cajal bodies assembly, acting through COIL phosphorylation and the control of coilin degradation. Involved in Golgi disassembly during the cell cycle: following phosphorylation by PLK3 during mitosis, it is required to induce Golgi fragmentation. Phosphorylates BANF1: disrupts its ability to bind DNA, reduces its binding to LEM domain-containing proteins and causes its relocalization from the nucleus to the cytoplasm. Phosphorylates TP53BP1 and p53/TP53 on 'Thr-18', preventing the interaction between p53/TP53 and MDM2. Phosphorylates ATF2 which activates its transcriptional activity. Phosphorylates JUN. The chain is Serine/threonine-protein kinase VRK1 (vrk1) from Danio rerio (Zebrafish).